We begin with the raw amino-acid sequence, 179 residues long: Large ribosomal subunit protein uL5 (179 aa).

This sequence belongs to the universal ribosomal protein uL5 family. Part of the 50S ribosomal subunit; part of the 5S rRNA/L5/L18/L25 subcomplex. Contacts the 5S rRNA and the P site tRNA. Forms a bridge to the 30S subunit in the 70S ribosome.

This is one of the proteins that bind and probably mediate the attachment of the 5S RNA into the large ribosomal subunit, where it forms part of the central protuberance. In the 70S ribosome it contacts protein S13 of the 30S subunit (bridge B1b), connecting the 2 subunits; this bridge is implicated in subunit movement. Contacts the P site tRNA; the 5S rRNA and some of its associated proteins might help stabilize positioning of ribosome-bound tRNAs. The chain is Large ribosomal subunit protein uL5 from Bacillus anthracis (strain A0248).